Reading from the N-terminus, the 376-residue chain is Natterin-2 (376 aa).

The signal sequence occupies residues 1-18; sequence MNLSVLLVTLLLLSWTSA. A propeptide spanning residues 19 to 27 is cleaved from the precursor; it reads EKDLKVRVA.

Belongs to the natterin family. Contains 4 disulfide bonds. In terms of tissue distribution, expressed by the venom gland.

The protein localises to the secreted. Its activity is regulated as follows. Inhibited by tissue-kallikrein inhibitor TKI and trasylol. Plasma kallikrein inhibitor PKSI527 and classical inhibitors of serine-, metallo-, thiol- or aspartate-peptidases evokes a minor inhibition of the peptide digestion. In terms of biological role, shows nociceptive, edema-inducing and kininogenase activity with release of kallidin from low molecular weight kininogen. The cleavage occurs at Met-Lys bonds. The sequence is that of Natterin-2 from Thalassophryne nattereri (Copper Joe toadfish).